Here is a 558-residue protein sequence, read N- to C-terminus: Phosphatidylserine lipase ABHD16A (558 aa).

The next 2 helical transmembrane spans lie at 60 to 80 (ILALASVFWSISYYSSPFAFF) and 93 to 113 (VVPFSHYAGTLLLLLAGVACL). Over 114-558 (RGIGRWTNPQ…AQNFQMPWHL (445 aa)) the chain is Cytoplasmic. The AB hydrolase-1 domain maps to 281 to 407 (LVICCEGNAG…LVTRTVRQHL (127 aa)). Catalysis depends on charge relay system residues S355, D430, and H507.

It belongs to the AB hydrolase superfamily. ABHD16 family.

The protein resides in the membrane. The enzyme catalyses 1-heptadecanoyl-2-(5Z,8Z,11Z,14Z-eicosatetraenoyl)-sn-glycero-3-phosphoserine + H2O = 1-heptadecanoyl-sn-glycero-3-phosphoserine + (5Z,8Z,11Z,14Z)-eicosatetraenoate + H(+). It catalyses the reaction 1-hexadecanoyl-2-(9Z-octadecenoyl)-sn-glycero-3-phospho-L-serine + H2O = 1-hexadecanoyl-sn-glycero-3-phospho-L-serine + (9Z)-octadecenoate + H(+). It carries out the reaction 1-octadecanoyl-2-(9Z,12Z-octadecadienoyl)-sn-glycero-3-phosphoserine + H2O = 1-octadecanoyl-sn-glycero-3-phosphoserine + (9Z,12Z)-octadecadienoate + H(+). The catalysed reaction is 1-heptadecanoyl-2-(5Z,8Z,11Z,14Z-eicosatetraenoyl)-sn-glycero-3-phosphocholine + H2O = 1-heptadecanoyl-sn-glycero-3-phosphocholine + (5Z,8Z,11Z,14Z)-eicosatetraenoate + H(+). The enzyme catalyses 1-hexadecanoyl-2-(9Z-octadecenoyl)-sn-glycero-3-phosphoglycerol + H2O = 1-hexadecanoyl-sn-glycero-3-phosphoglycerol + (9Z)-octadecenoate + H(+). It catalyses the reaction 1-hexadecanoyl-2-(9Z-octadecenoyl)-sn-glycero-3-phospho-(1D-myo-inositol) + H2O = 1-hexadecanoyl-sn-glycero-3-phospho-(1D-myo-inositol) + (9Z)-octadecenoate + H(+). It carries out the reaction 1-heptadecanoyl-2-(5Z,8Z,11Z,14Z-eicosatetraenoyl)-sn-glycero-3-phosphoethanolamine + H2O = 1-heptadecanoyl-sn-glycero-3-phosphoethanolamine + (5Z,8Z,11Z,14Z)-eicosatetraenoate + H(+). The catalysed reaction is 1-hexadecanoyl-2-(9Z-octadecenoyl)-sn-glycero-3-phospho-(1'-sn-glycerol) + H2O = 1-hexadecanoyl-sn-glycero-3-phospho-(1'-sn-glycerol) + (9Z)-octadecenoate + H(+). The enzyme catalyses Hydrolyzes glycerol monoesters of long-chain fatty acids.. It catalyses the reaction 1-tetradecanoylglycerol + H2O = tetradecanoate + glycerol + H(+). It carries out the reaction 2-hexadecanoylglycerol + H2O = glycerol + hexadecanoate + H(+). The catalysed reaction is 1-(9Z-octadecenoyl)-glycerol + H2O = glycerol + (9Z)-octadecenoate + H(+). The enzyme catalyses 2-(9Z-octadecenoyl)-glycerol + H2O = glycerol + (9Z)-octadecenoate + H(+). It catalyses the reaction 2-(9Z,12Z-octadecadienoyl)-glycerol + H2O = (9Z,12Z)-octadecadienoate + glycerol + H(+). It carries out the reaction 1-(5Z,8Z,11Z,14Z-eicosatetraenoyl)-glycerol + H2O = glycerol + (5Z,8Z,11Z,14Z)-eicosatetraenoate + H(+). The catalysed reaction is 2-(5Z,8Z,11Z,14Z-eicosatetraenoyl)-glycerol + H2O = glycerol + (5Z,8Z,11Z,14Z)-eicosatetraenoate + H(+). The enzyme catalyses prostaglandin D2-1-glycerol ester + H2O = prostaglandin D2 + glycerol + H(+). It catalyses the reaction 2-glyceryl-15-deoxy-Delta(12,14)-prostaglandin J2 + H2O = 15-deoxy-Delta(12,14)-prostaglandin J2 + glycerol + H(+). It carries out the reaction 1-(9Z,12Z-octadecadienoyl)-glycerol + H2O = (9Z,12Z)-octadecadienoate + glycerol + H(+). With respect to regulation, inhibited by beta-lactone-based lipid inhibitors, such as beta-lactone palmostatin-B. Its function is as follows. Phosphatidylserine (PS) lipase that mediates the hydrolysis of phosphatidylserine to generate lysophosphatidylserine (LPS). LPS constitutes a class of signaling lipids that regulates immunological and neurological processes. Has no activity towards diacylglycerol, triacylglycerol or lysophosphatidylserine lipase. Also has monoacylglycerol lipase activity, with preference for 1-(9Z,12Z-octadecadienoyl)-glycerol (1-LG) and 2-glyceryl-15-deoxy-Delta(12,14)-prostaglandin J2 (15d-PGJ(2)-G). This chain is Phosphatidylserine lipase ABHD16A, found in Homo sapiens (Human).